The primary structure comprises 510 residues: Probable mannosyl-oligosaccharide alpha-1,2-mannosidase 1B (510 aa).

The first 21 residues, 1-21 (MHFSSLSLPLTALSLVTPSLA), serve as a signal peptide directing secretion. Residues N35, N95, N182, and N249 are each glycosylated (N-linked (GlcNAc...) asparagine). C332 and C361 are joined by a disulfide. N-linked (GlcNAc...) asparagine glycosylation is present at N366. The active-site Proton donor is E375. T501 is a Ca(2+) binding site.

This sequence belongs to the glycosyl hydrolase 47 family. As to quaternary structure, monomer. Ca(2+) serves as cofactor. Requires Mg(2+) as cofactor.

The protein localises to the cytoplasmic vesicle lumen. It carries out the reaction N(4)-(alpha-D-Man-(1-&gt;2)-alpha-D-Man-(1-&gt;2)-alpha-D-Man-(1-&gt;3)-[alpha-D-Man-(1-&gt;2)-alpha-D-Man-(1-&gt;3)-[alpha-D-Man-(1-&gt;2)-alpha-D-Man-(1-&gt;6)]-alpha-D-Man-(1-&gt;6)]-beta-D-Man-(1-&gt;4)-beta-D-GlcNAc-(1-&gt;4)-beta-D-GlcNAc)-L-asparaginyl-[protein] (N-glucan mannose isomer 9A1,2,3B1,2,3) + 4 H2O = N(4)-(alpha-D-Man-(1-&gt;3)-[alpha-D-Man-(1-&gt;3)-[alpha-D-Man-(1-&gt;6)]-alpha-D-Man-(1-&gt;6)]-beta-D-Man-(1-&gt;4)-beta-D-GlcNAc-(1-&gt;4)-beta-D-GlcNAc)-L-asparaginyl-[protein] (N-glucan mannose isomer 5A1,2) + 4 beta-D-mannose. It catalyses the reaction N(4)-(alpha-D-Man-(1-&gt;2)-alpha-D-Man-(1-&gt;2)-alpha-D-Man-(1-&gt;3)-[alpha-D-Man-(1-&gt;3)-[alpha-D-Man-(1-&gt;2)-alpha-D-Man-(1-&gt;6)]-alpha-D-Man-(1-&gt;6)]-beta-D-Man-(1-&gt;4)-beta-D-GlcNAc-(1-&gt;4)-beta-D-GlcNAc)-L-asparaginyl-[protein] (N-glucan mannose isomer 8A1,2,3B1,3) + 3 H2O = N(4)-(alpha-D-Man-(1-&gt;3)-[alpha-D-Man-(1-&gt;3)-[alpha-D-Man-(1-&gt;6)]-alpha-D-Man-(1-&gt;6)]-beta-D-Man-(1-&gt;4)-beta-D-GlcNAc-(1-&gt;4)-beta-D-GlcNAc)-L-asparaginyl-[protein] (N-glucan mannose isomer 5A1,2) + 3 beta-D-mannose. It functions in the pathway protein modification; protein glycosylation. Involved in the maturation of Asn-linked oligosaccharides. Progressively trims alpha-1,2-linked mannose residues from Man(9)GlcNAc(2) to produce Man(5)GlcNAc(2). This is Probable mannosyl-oligosaccharide alpha-1,2-mannosidase 1B (mns1B) from Aspergillus flavus (strain ATCC 200026 / FGSC A1120 / IAM 13836 / NRRL 3357 / JCM 12722 / SRRC 167).